Consider the following 275-residue polypeptide: Large ribosomal subunit protein uL2 (275 aa).

The segment covering 38–53 (NSKAGRNNNGRITTRH) has biased composition (polar residues). 2 disordered regions span residues 38–59 (NSKAGRNNNGRITTRHQGGGHK) and 224–257 (AMNPIDHPHGGGEGRTAAGRDPVSPWGTPTKGFR).

The protein belongs to the universal ribosomal protein uL2 family. As to quaternary structure, part of the 50S ribosomal subunit. Forms a bridge to the 30S subunit in the 70S ribosome.

Functionally, one of the primary rRNA binding proteins. Required for association of the 30S and 50S subunits to form the 70S ribosome, for tRNA binding and peptide bond formation. It has been suggested to have peptidyltransferase activity; this is somewhat controversial. Makes several contacts with the 16S rRNA in the 70S ribosome. This Burkholderia thailandensis (strain ATCC 700388 / DSM 13276 / CCUG 48851 / CIP 106301 / E264) protein is Large ribosomal subunit protein uL2.